The following is a 332-amino-acid chain: Phosphoribosylformylglycinamidine cyclo-ligase (332 aa).

The protein belongs to the AIR synthase family.

Its subcellular location is the cytoplasm. The catalysed reaction is 2-formamido-N(1)-(5-O-phospho-beta-D-ribosyl)acetamidine + ATP = 5-amino-1-(5-phospho-beta-D-ribosyl)imidazole + ADP + phosphate + H(+). The protein operates within purine metabolism; IMP biosynthesis via de novo pathway; 5-amino-1-(5-phospho-D-ribosyl)imidazole from N(2)-formyl-N(1)-(5-phospho-D-ribosyl)glycinamide: step 2/2. The protein is Phosphoribosylformylglycinamidine cyclo-ligase of Clostridium acetobutylicum (strain ATCC 824 / DSM 792 / JCM 1419 / IAM 19013 / LMG 5710 / NBRC 13948 / NRRL B-527 / VKM B-1787 / 2291 / W).